The chain runs to 410 residues: LL-diaminopimelate aminotransferase (410 aa).

The substrate site is built by tyrosine 15 and glycine 42. Pyridoxal 5'-phosphate-binding positions include tyrosine 72, 108 to 109 (SK), tyrosine 132, asparagine 187, tyrosine 218, and 246 to 248 (SFS). Positions 109, 132, and 187 each coordinate substrate. Lysine 249 carries the N6-(pyridoxal phosphate)lysine modification. Arginine 257 and asparagine 292 together coordinate pyridoxal 5'-phosphate. The substrate site is built by asparagine 292 and arginine 388.

Belongs to the class-I pyridoxal-phosphate-dependent aminotransferase family. LL-diaminopimelate aminotransferase subfamily. As to quaternary structure, homodimer. Pyridoxal 5'-phosphate is required as a cofactor.

It carries out the reaction (2S,6S)-2,6-diaminopimelate + 2-oxoglutarate = (S)-2,3,4,5-tetrahydrodipicolinate + L-glutamate + H2O + H(+). It participates in amino-acid biosynthesis; L-lysine biosynthesis via DAP pathway; LL-2,6-diaminopimelate from (S)-tetrahydrodipicolinate (aminotransferase route): step 1/1. Involved in the synthesis of meso-diaminopimelate (m-DAP or DL-DAP), required for both lysine and peptidoglycan biosynthesis. Catalyzes the direct conversion of tetrahydrodipicolinate to LL-diaminopimelate. The protein is LL-diaminopimelate aminotransferase of Geotalea daltonii (strain DSM 22248 / JCM 15807 / FRC-32) (Geobacter daltonii).